The sequence spans 88 residues: UPF0297 protein Bcer98_3100 (88 aa).

The protein belongs to the UPF0297 family.

The protein is UPF0297 protein Bcer98_3100 of Bacillus cytotoxicus (strain DSM 22905 / CIP 110041 / 391-98 / NVH 391-98).